A 320-amino-acid polypeptide reads, in one-letter code: o-succinylbenzoate synthase (320 aa).

Catalysis depends on Lys133, which acts as the Proton donor. Positions 161, 190, and 213 each coordinate Mg(2+). Lys235 acts as the Proton acceptor in catalysis.

This sequence belongs to the mandelate racemase/muconate lactonizing enzyme family. MenC type 1 subfamily. Requires a divalent metal cation as cofactor.

The enzyme catalyses (1R,6R)-6-hydroxy-2-succinyl-cyclohexa-2,4-diene-1-carboxylate = 2-succinylbenzoate + H2O. Its pathway is quinol/quinone metabolism; 1,4-dihydroxy-2-naphthoate biosynthesis; 1,4-dihydroxy-2-naphthoate from chorismate: step 4/7. It participates in quinol/quinone metabolism; menaquinone biosynthesis. Functionally, converts 2-succinyl-6-hydroxy-2,4-cyclohexadiene-1-carboxylate (SHCHC) to 2-succinylbenzoate (OSB). The protein is o-succinylbenzoate synthase of Escherichia coli O6:H1 (strain CFT073 / ATCC 700928 / UPEC).